Reading from the N-terminus, the 430-residue chain is DNA repair protein recA homolog 3, mitochondrial (430 aa).

The transit peptide at 1-35 directs the protein to the mitochondrion; that stretch reads MARILRNVYSLRSSLFSSELLRRSVVGTSFQLRGF. 119 to 126 provides a ligand contact to ATP; the sequence is GPEASGKT. The disordered stretch occupies residues 385-415; it reads DEAADKETESESEEEDSLRVVVSPDNTDDES.

This sequence belongs to the RecA family.

The protein resides in the mitochondrion. Involved in recombination ability and DNA strand transfer activity. This Arabidopsis thaliana (Mouse-ear cress) protein is DNA repair protein recA homolog 3, mitochondrial.